Here is a 148-residue protein sequence, read N- to C-terminus: SsrA-binding protein (148 aa).

This sequence belongs to the SmpB family.

It localises to the cytoplasm. Its function is as follows. Required for rescue of stalled ribosomes mediated by trans-translation. Binds to transfer-messenger RNA (tmRNA), required for stable association of tmRNA with ribosomes. tmRNA and SmpB together mimic tRNA shape, replacing the anticodon stem-loop with SmpB. tmRNA is encoded by the ssrA gene; the 2 termini fold to resemble tRNA(Ala) and it encodes a 'tag peptide', a short internal open reading frame. During trans-translation Ala-aminoacylated tmRNA acts like a tRNA, entering the A-site of stalled ribosomes, displacing the stalled mRNA. The ribosome then switches to translate the ORF on the tmRNA; the nascent peptide is terminated with the 'tag peptide' encoded by the tmRNA and targeted for degradation. The ribosome is freed to recommence translation, which seems to be the essential function of trans-translation. The polypeptide is SsrA-binding protein (Pseudothermotoga lettingae (strain ATCC BAA-301 / DSM 14385 / NBRC 107922 / TMO) (Thermotoga lettingae)).